A 315-amino-acid chain; its full sequence is Initiation factor TFIIB homolog (315 aa).

Belongs to the asfivirus C315R family.

In terms of biological role, putative initation factor. This African swine fever virus (strain Badajoz 1971 Vero-adapted) (Ba71V) protein is Initiation factor TFIIB homolog.